The following is a 181-amino-acid chain: Inner membrane-spanning protein YciB (181 aa).

Transmembrane regions (helical) follow at residues 10 to 30, 50 to 70, 80 to 100, 118 to 138, and 148 to 168; these read LVIF…GALI, MHLI…VFHD, IIYS…KSIL, VTWY…YVAF, and FKVF…VFYL.

Belongs to the YciB family.

The protein resides in the cell inner membrane. Functionally, plays a role in cell envelope biogenesis, maintenance of cell envelope integrity and membrane homeostasis. This chain is Inner membrane-spanning protein YciB, found in Shewanella baltica (strain OS223).